A 1893-amino-acid polypeptide reads, in one-letter code: CDK5 regulatory subunit-associated protein 2 (1893 aa).

The tract at residues 51–94 is CM1 motif; interacts with the gTuRC; it reads TVSPTRARNMKDFENQITELKKENFNLKLRIYFLEERMQQEFHG. The tract at residues 58–196 is interaction with NCKAP5L; the sequence is RNMKDFENQI…TEKALRLRLE (139 aa). Ser547 is subject to Phosphoserine. The segment at 926–1208 is interaction with MAPRE1; that stretch reads PGVTNREAKK…LENLKQQLEE (283 aa). Phosphothreonine is present on Thr1001. The segment at 1015–1071 is disordered; it reads AAYQDSPGEQKGIKTTSSVWRDKEMDSDQQTSYEIDSEICPPDDLASLPSCKENPED. The interval 1196–1893 is interaction with PCNT and AKAP9; it reads SRVLENLKQQ…GTCSPSRPGS (698 aa). Ser1238 carries the post-translational modification Phosphoserine. 2 disordered regions span residues 1347–1381 and 1467–1486; these read LPES…NETE and IKGS…SLSR. The span at 1469–1486 shows a compositional bias: basic and acidic residues; it reads GSRDKQKENDKLRESLSR. Phosphoserine is present on Ser1490. Residues 1500–1519 are compositionally biased toward basic and acidic residues; it reads SVKEENERLQKEGSEKERHN. The tract at residues 1500 to 1521 is disordered; it reads SVKEENERLQKEGSEKERHNQQ. Phosphoserine occurs at positions 1663 and 1666. Disordered regions lie at residues 1675-1706 and 1752-1774; these read AVTP…ATST and DVQT…PHPA. The tract at residues 1726–1768 is interaction with CDK5R1; that stretch reads HVLGLIEDYEALLKQISQGQRLLAEMDVQTQEAPSSTSQELGT. Positions 1753–1766 are enriched in polar residues; it reads VQTQEAPSSTSQEL. The tract at residues 1861 to 1870 is required for centrosomal attachment, Golgi localization and CALM1 interaction; the sequence is VVTHKILRKA. The segment at 1874–1893 is disordered; sequence LELRPGGSHPGTCSPSRPGS. Positions 1884-1893 are enriched in polar residues; sequence GTCSPSRPGS. Ser1893 carries the post-translational modification Phosphoserine.

As to quaternary structure, homodimer. Interacts with CDK5R1 (p35 form). CDK5RAP1, CDK5RAP2 and CDK5RAP3 show competitive binding to CDK5R1. May form a complex with CDK5R1 and CDK5. Interacts with pericentrin/PCNT; the interaction is leading to centrosomal and Golgi localization of CDK5RAP2 and PCNT. Interacts with AKAP9; the interaction targets CDK5RAP2 and AKAP9 to Golgi apparatus. Interacts with MAPRE1; the interaction is direct and targets CDK5RAP2 and EB1/MAPRE1 to microtubule plus ends. Interacts with TUBG1; the interaction is leading to the centrosomal localization of CDK5RAP2 and TUBG1. Interacts with TUBGCP3. Interacts with CALM1. Interacts with CDC20. Interacts with CEP68; degradation of CEP68 in early mitosis leads to removal of CDK5RAP2 from the centrosome which promotes centriole disengagement and subsequent centriole separation. Interacts with NCKAP5L. Forms a pericentrosomal complex with AKAP9, MAPRE1 and PDE4DIP isoform 13/MMG8/SMYLE; within this complex, MAPRE1 binding to CDK5RAP2 may be mediated by PDE4DIP. Interacts with LGALS3BP; this interaction may connect the pericentrosomal complex to the gamma-tubulin ring complex (gTuRC) to promote microtubule assembly and acetylation. Interacts with CCDC66. Associates (via CM1 motif) with TUBGCP2 of the gTuRC; the interaction plays a role in gTuRC activation. Phosphorylated in vitro by CDK5.

It is found in the cytoplasm. Its subcellular location is the cytoskeleton. The protein localises to the microtubule organizing center. The protein resides in the centrosome. It localises to the golgi apparatus. Functionally, potential regulator of CDK5 activity via its interaction with CDK5R1. Negative regulator of centriole disengagement (licensing) which maintains centriole engagement and cohesion. Involved in regulation of mitotic spindle orientation. Plays a role in the spindle checkpoint activation by acting as a transcriptional regulator of both BUBR1 and MAD2 promoter. Together with EB1/MAPRE1, may promote microtubule polymerization, bundle formation, growth and dynamics at the plus ends. Regulates centrosomal maturation by recruitment of the gamma-tubulin ring complex (gTuRC) onto centrosomes. In complex with PDE4DIP isoform 13/MMG8/SMYLE, MAPRE1 and AKAP9, contributes to microtubules nucleation and extension from the centrosome to the cell periphery. Required for the recruitment of AKAP9 to centrosomes. Plays a role in neurogenesis. This Pan troglodytes (Chimpanzee) protein is CDK5 regulatory subunit-associated protein 2 (CDK5RAP2).